Here is a 263-residue protein sequence, read N- to C-terminus: Apolipoprotein A-I (263 aa).

Positions 1-18 (MKAVVLAVAVLFLTGSQA) are cleaved as a signal peptide. Repeat copies occupy residues 66–87 (LKLLDNWDTLSTTFSKLRSELG) and 88–109 (PVTQEFWDNLEKDTEWLRQEMN). The 10 X approximate tandem repeats stretch occupies residues 66-263 (LKLLDNWDTL…DEVSKKLSAQ (198 aa)). Residue methionine 108 is modified to Methionine sulfoxide. One copy of the 3; half-length repeat lies at 110 to 120 (KDLVEVKEKVQ). 5 repeat units span residues 121–142 (PYLKNFQEKVQLELEHYRKKVE), 143–164 (PLGTDLRDGARQKLQELQEKLT), 165–186 (PLGEDLRDRARQHVDELRAQLG), 187–206 (PYSDQMRQRLTQRLEALKDS), and 207–228 (ASLAEYQAKAQEHLKTFSEKAK). The 9; half-length repeat unit spans residues 229 to 239 (PALEDLRLGLL). The stretch at 240–263 (PVLESLKASFLSSIDEVSKKLSAQ) is repeat 10.

This sequence belongs to the apolipoprotein A1/A4/E family. As to quaternary structure, homodimer. Interacts with APOA1BP and CLU. Component of a sperm activating protein complex (SPAP), consisting of APOA1, an immunoglobulin heavy chain, an immunoglobulin light chain and albumin. Interacts with NDRG1. Interacts with SCGB3A2. Interacts with NAXE and YJEFN3. Post-translationally, glycosylated. In terms of processing, palmitoylated. Phosphorylation sites are present in the extracellular medium.

Its subcellular location is the secreted. Participates in the reverse transport of cholesterol from tissues to the liver for excretion by promoting cholesterol efflux from tissues and by acting as a cofactor for the lecithin cholesterol acyltransferase (LCAT). As part of the SPAP complex, activates spermatozoa motility. In Octodon degus (Degu), this protein is Apolipoprotein A-I (APOA1).